The chain runs to 448 residues: Alginate biosynthesis transcriptional regulatory protein AlgB (448 aa).

Residues 10 to 124 (RILLVDDESA…QLRLATAKQL (115 aa)) enclose the Response regulatory domain. Asp59 carries the post-translational modification 4-aspartylphosphate. The region spanning 147 to 376 (LDSHSPAMMA…LRNVVERASI (230 aa)) is the Sigma-54 factor interaction domain. ATP contacts are provided by residues 175-182 (GESGTGKG) and 238-247 (ADGGTLFLDE). The H-T-H motif DNA-binding region spans 425–444 (LDQAAKTLGIDASTLYRKRK).

The protein operates within glycan biosynthesis; alginate biosynthesis [regulation]. Positive regulator of the alginate biosynthetic gene algD. This is Alginate biosynthesis transcriptional regulatory protein AlgB (algB) from Pseudomonas putida (strain ATCC 47054 / DSM 6125 / CFBP 8728 / NCIMB 11950 / KT2440).